The sequence spans 350 residues: Protein RecA (350 aa).

An ATP-binding site is contributed by 67 to 74 (GPESSGKT).

It belongs to the RecA family.

The protein localises to the cytoplasm. Can catalyze the hydrolysis of ATP in the presence of single-stranded DNA, the ATP-dependent uptake of single-stranded DNA by duplex DNA, and the ATP-dependent hybridization of homologous single-stranded DNAs. It interacts with LexA causing its activation and leading to its autocatalytic cleavage. This chain is Protein RecA, found in Baumannia cicadellinicola subsp. Homalodisca coagulata.